A 620-amino-acid chain; its full sequence is Toxin coregulated pilus biosynthesis protein I (620 aa).

The 237-residue stretch at 344 to 580 (TMNDLSIKQT…DVAKQMEDIR (237 aa)) folds into the Methyl-accepting transducer domain.

It belongs to the methyl-accepting chemotaxis (MCP) protein family.

The protein localises to the cell inner membrane. May function as an environmental regulator of TCP biogenesis. Negatively regulates the synthesis of the major pilin subunit of TCP (TcpA). The sequence is that of Toxin coregulated pilus biosynthesis protein I (tcpI) from Vibrio cholerae serotype O1 (strain ATCC 39315 / El Tor Inaba N16961).